The sequence spans 133 residues: ATP synthase epsilon chain (133 aa).

Belongs to the ATPase epsilon chain family. In terms of assembly, F-type ATPases have 2 components, CF(1) - the catalytic core - and CF(0) - the membrane proton channel. CF(1) has five subunits: alpha(3), beta(3), gamma(1), delta(1), epsilon(1). CF(0) has three main subunits: a, b and c.

Its subcellular location is the cell membrane. In terms of biological role, produces ATP from ADP in the presence of a proton gradient across the membrane. The polypeptide is ATP synthase epsilon chain (Bacillus anthracis (strain A0248)).